Here is a 374-residue protein sequence, read N- to C-terminus: DNA replication and repair protein RecF (374 aa).

Position 34-41 (34-41 (GDNGAGKT)) interacts with ATP.

Belongs to the RecF family.

It localises to the cytoplasm. The RecF protein is involved in DNA metabolism; it is required for DNA replication and normal SOS inducibility. RecF binds preferentially to single-stranded, linear DNA. It also seems to bind ATP. The protein is DNA replication and repair protein RecF of Rhizobium leguminosarum bv. trifolii (strain WSM2304).